The sequence spans 377 residues: RIB43A-like with coiled-coils protein 2 (377 aa).

A coiled-coil region spans residues glutamate 188–aspartate 238. Residues glutamine 355–arginine 377 form a disordered region. Positions proline 360–arginine 377 are enriched in polar residues.

It belongs to the RIB43A family. In terms of assembly, microtubule inner protein component of sperm flagellar doublet microtubules.

It localises to the cytoplasm. It is found in the cytoskeleton. Its subcellular location is the cilium axoneme. The protein resides in the flagellum axoneme. In terms of biological role, microtubule inner protein (MIP) part of the dynein-decorated doublet microtubules (DMTs) in cilia axoneme, which is required for motile cilia beating. The chain is RIB43A-like with coiled-coils protein 2 from Rattus norvegicus (Rat).